We begin with the raw amino-acid sequence, 392 residues long: Formate-dependent phosphoribosylglycinamide formyltransferase (392 aa).

Residues 22-23 (EL) and Glu-82 each bind N(1)-(5-phospho-beta-D-ribosyl)glycinamide. Residues Arg-114, Lys-155, 160 to 165 (SSGKGQ), 195 to 198 (EGVV), and Glu-203 each bind ATP. The ATP-grasp domain occupies 119-308 (RLAAEELQLP…EFALHVRAFL (190 aa)). Positions 267 and 279 each coordinate Mg(2+). N(1)-(5-phospho-beta-D-ribosyl)glycinamide contacts are provided by residues Asp-286, Lys-355, and 362–363 (RR).

The protein belongs to the PurK/PurT family. As to quaternary structure, homodimer.

It carries out the reaction N(1)-(5-phospho-beta-D-ribosyl)glycinamide + formate + ATP = N(2)-formyl-N(1)-(5-phospho-beta-D-ribosyl)glycinamide + ADP + phosphate + H(+). Its pathway is purine metabolism; IMP biosynthesis via de novo pathway; N(2)-formyl-N(1)-(5-phospho-D-ribosyl)glycinamide from N(1)-(5-phospho-D-ribosyl)glycinamide (formate route): step 1/1. In terms of biological role, involved in the de novo purine biosynthesis. Catalyzes the transfer of formate to 5-phospho-ribosyl-glycinamide (GAR), producing 5-phospho-ribosyl-N-formylglycinamide (FGAR). Formate is provided by PurU via hydrolysis of 10-formyl-tetrahydrofolate. In Shigella sonnei (strain Ss046), this protein is Formate-dependent phosphoribosylglycinamide formyltransferase.